The following is a 97-amino-acid chain: Small ribosomal subunit protein bS16c (97 aa).

The protein belongs to the bacterial ribosomal protein bS16 family.

Its subcellular location is the plastid. The protein localises to the chloroplast. The chain is Small ribosomal subunit protein bS16c from Piper cenocladum (Ant piper).